The sequence spans 61 residues: Metallothionein-1B (61 aa).

The segment at 1–29 (MDPNCSCVAGESCTCAGSCKCKQCRCASC) is beta. A divalent metal cation-binding residues include Cys-5, Cys-7, Cys-13, Cys-15, Cys-19, Cys-21, Cys-24, Cys-26, Cys-29, Cys-33, Cys-34, Cys-36, Cys-37, Cys-41, Cys-44, Cys-48, Cys-50, Cys-57, Cys-59, and Cys-60. Positions 30–61 (KKSCCSCCPVGCAKCAQGCVCKGASDKCSCCA) are alpha.

This sequence belongs to the metallothionein superfamily. Type 1 family.

Metallothioneins have a high content of cysteine residues that bind various heavy metals; these proteins are transcriptionally regulated by both heavy metals and glucocorticoids. The protein is Metallothionein-1B of Equus caballus (Horse).